A 344-amino-acid polypeptide reads, in one-letter code: Heat-inducible transcription repressor HrcA (344 aa).

This sequence belongs to the HrcA family.

In terms of biological role, negative regulator of class I heat shock genes (grpE-dnaK-dnaJ and groELS operons). Prevents heat-shock induction of these operons. The protein is Heat-inducible transcription repressor HrcA of Streptococcus sanguinis (strain SK36).